The following is a 172-amino-acid chain: Shikimate kinase (172 aa).

17–22 (GTGKST) provides a ligand contact to ATP. Residue Ser21 coordinates Mg(2+). Substrate is bound by residues Asp39, Arg63, and Gly84. Arg122 contributes to the ATP binding site. Residue Arg140 participates in substrate binding.

The protein belongs to the shikimate kinase family. As to quaternary structure, monomer. It depends on Mg(2+) as a cofactor.

The protein resides in the cytoplasm. The enzyme catalyses shikimate + ATP = 3-phosphoshikimate + ADP + H(+). The protein operates within metabolic intermediate biosynthesis; chorismate biosynthesis; chorismate from D-erythrose 4-phosphate and phosphoenolpyruvate: step 5/7. Functionally, catalyzes the specific phosphorylation of the 3-hydroxyl group of shikimic acid using ATP as a cosubstrate. This is Shikimate kinase from Staphylococcus haemolyticus (strain JCSC1435).